Reading from the N-terminus, the 102-residue chain is Large ribosomal subunit protein bL21 (102 aa).

The protein belongs to the bacterial ribosomal protein bL21 family. As to quaternary structure, part of the 50S ribosomal subunit. Contacts protein L20.

This protein binds to 23S rRNA in the presence of protein L20. This is Large ribosomal subunit protein bL21 from Arthrobacter sp. (strain FB24).